We begin with the raw amino-acid sequence, 263 residues long: MRFLILFLALSLGGIDAAPPVQSRIIGGFKCKKNSQPWHVAVLRSNKYICGGVLLDPNWVLTAAHCYGNDTSQHNVWLGKNKLFQREPSAQHRWVSKSFPHPDYNMSLLNDHIPHPEDKSNDLMLLRLSKPADITDAVKPIDLPTEEPKLGSTCLASGWGSITPTKYQIPNDLQCVFIKLLPNENCAKAYVHKVTDVMLCVGETGGGKGTCKGDSGGPLICDGVLHGITSWGSIPCAKPNAPGVFTKLIKFTSWIKDTMAKNP.

The first 17 residues, 1 to 17 (MRFLILFLALSLGGIDA), serve as a signal peptide directing secretion. Residues 18–24 (APPVQSR) constitute a propeptide, activation peptide. The 236-residue stretch at 25–260 (IIGGFKCKKN…FTSWIKDTMA (236 aa)) folds into the Peptidase S1 domain. Intrachain disulfides connect Cys31/Cys175, Cys50/Cys66, Cys154/Cys221, Cys186/Cys200, and Cys211/Cys236. Catalysis depends on His65, which acts as the Charge relay system. Asn69 and Asn105 each carry an N-linked (GlcNAc...) asparagine glycan. Asp122 acts as the Charge relay system in catalysis. Catalysis depends on Ser215, which acts as the Charge relay system.

This sequence belongs to the peptidase S1 family. Kallikrein subfamily. Expressed in testis and submaxillary gland. Not expressed in heart, brain, spleen, lung, liver, muscle, kidney and ovary. In the testis, expression localized specifically to Leydig cells in the interstitial tissues.

With respect to regulation, strongly inhibited by protease inhibitors diisopropyl fluorophosphate, phenylmethanesulfonyl fluoride and SBTI. Functionally, serine protease with chymotrypsin-like cleavage specificity. Shows activity towards casein, gelatin, IGFBP3 and fibronectin but not towards laminin or collagens I and IV. Does not hydrolyze kininogin to release Lys-bradykinin. This chain is Kallikrein 1-related peptidase b27 (Klk1b27), found in Mus musculus (Mouse).